The chain runs to 91 residues: Cell division topological specificity factor (91 aa).

It belongs to the MinE family.

Functionally, prevents the cell division inhibition by proteins MinC and MinD at internal division sites while permitting inhibition at polar sites. This ensures cell division at the proper site by restricting the formation of a division septum at the midpoint of the long axis of the cell. The chain is Cell division topological specificity factor from Bradyrhizobium sp. (strain BTAi1 / ATCC BAA-1182).